The primary structure comprises 147 residues: Hemoglobin subunit beta-1/2 (147 aa).

At V2 the chain carries N-acetylvaline. A Globin domain is found at H3 to H147. The residue at position 13 (T13) is a Phosphothreonine. S45 carries the post-translational modification Phosphoserine. Position 60 is an N6-acetyllysine (K60). A heme b-binding site is contributed by H64. The residue at position 83 (K83) is an N6-acetyllysine. Heme b is bound at residue H93. Position 94 is an S-nitrosocysteine (C94). K145 carries the post-translational modification N6-acetyllysine.

Belongs to the globin family. Heterotetramer of two alpha chains and two beta chains. As to expression, red blood cells.

Functionally, involved in oxygen transport from the lung to the various peripheral tissues. The chain is Hemoglobin subunit beta-1/2 (HBB1) from Oryctolagus cuniculus (Rabbit).